Consider the following 368-residue polypeptide: Cytoskeleton protein RodZ (368 aa).

Over 1 to 111 (MNTEASQDQT…LGKKHKKRDG (111 aa)) the chain is Cytoplasmic. The region spanning 19 to 79 (LRQARESLGL…KLVHLPEDEL (61 aa)) is the HTH cro/C1-type domain. The H-T-H motif DNA-binding region spans 30-49 (QQTVAERLCLKVSTIRDIEE). A helical; Signal-anchor for type II membrane protein membrane pass occupies residues 112–132 (WLMSFTWLIVLVVLGLTGAWW). Residues 133 to 368 (WQNHQAQQAE…RVARLTVGVE (236 aa)) lie on the Periplasmic side of the membrane. A disordered region spans residues 151 to 243 (SAQLSQNGGQ…STEPVDTANT (93 aa)). Residues 193-221 (STSAVTNSATTSSATTSSVPTTSSVPKTT) show a composition bias toward low complexity. The span at 229–243 (VPKTNSTEPVDTANT) shows a compositional bias: polar residues.

This sequence belongs to the RodZ family.

The protein resides in the cell inner membrane. Functionally, cytoskeletal protein that is involved in cell-shape control through regulation of the length of the long axis. The polypeptide is Cytoskeleton protein RodZ (Yersinia pseudotuberculosis serotype O:3 (strain YPIII)).